A 213-amino-acid polypeptide reads, in one-letter code: Transcriptional regulatory protein CrdR (213 aa).

The region spanning 4–119 is the Response regulatory domain; it reads KIFLLEDDYL…ELEARIKRFF (116 aa). Asp53 carries the 4-aspartylphosphate modification. The ompR/PhoB-type DNA-binding region spans 121 to 212; sequence DDPIEIMPNI…HKGVGYRFNP (92 aa).

Post-translationally, phosphorylated by CrdS.

Member of the two-component regulatory system CrdR/CrdS that induces the transcriptional induction of the copper resistance determinant CrdA. Upon phosphorylation by CrdS, functions as a transcriptional regulator by direct binding to promoter regions of target genes including the crdA promoter or nitric oxide-responsive gene promoters. The chain is Transcriptional regulatory protein CrdR from Helicobacter pylori (strain ATCC 700392 / 26695) (Campylobacter pylori).